A 2153-amino-acid chain; its full sequence is RNA-directed RNA polymerase L (2153 aa).

Residues His36, Glu54, Asp97, Glu110, and Val111 each contribute to the Mn(2+) site. Lys124 functions as the For endonuclease activity in the catalytic mechanism. The RdRp catalytic domain occupies 957–1143; the sequence is TGNVIKFKRR…AVNQEMWKSM (187 aa). Asp1100 serves as a coordination point for Mg(2+). An interaction with the viral nucleoprotein region spans residues 1291–2153; it reads KQAFYSYKHT…FPHDPVSSFY (863 aa).

It belongs to the Bunyavirales RNA polymerase family. As to quaternary structure, interacts with the viral nucleoprotein; this interaction is required for RdRp function. Requires Mn(2+) as cofactor. Mg(2+) serves as cofactor.

Its subcellular location is the host cytoplasm. It is found in the host perinuclear region. It catalyses the reaction RNA(n) + a ribonucleoside 5'-triphosphate = RNA(n+1) + diphosphate. Its function is as follows. RNA-dependent RNA polymerase, which is responsible for the replication and transcription of the viral RNA genome using antigenomic RNA as an intermediate. During transcription, synthesizes subgenomic RNAs and assures their capping by a cap-snatching mechanism, which involves the endonuclease activity cleaving the host capped pre-mRNAs. These short capped RNAs are then used as primers for viral transcription. Cleaves ssRNA substrates but not DNA. Seems to downregulate the expression of its own and heterologous mRNAs through its endonuclease activity. In Sin Nombre orthohantavirus (SNV), this protein is RNA-directed RNA polymerase L.